A 240-amino-acid chain; its full sequence is Phosphatidylserine decarboxylase proenzyme (240 aa).

The active-site Schiff-base intermediate with substrate; via pyruvic acid is the S209. A Pyruvic acid (Ser); by autocatalysis modification is found at S209.

This sequence belongs to the phosphatidylserine decarboxylase family. PSD-A subfamily. As to quaternary structure, heterodimer of a large membrane-associated beta subunit and a small pyruvoyl-containing alpha subunit. It depends on pyruvate as a cofactor. In terms of processing, is synthesized initially as an inactive proenzyme. Formation of the active enzyme involves a self-maturation process in which the active site pyruvoyl group is generated from an internal serine residue via an autocatalytic post-translational modification. Two non-identical subunits are generated from the proenzyme in this reaction, and the pyruvate is formed at the N-terminus of the alpha chain, which is derived from the carboxyl end of the proenzyme. The post-translation cleavage follows an unusual pathway, termed non-hydrolytic serinolysis, in which the side chain hydroxyl group of the serine supplies its oxygen atom to form the C-terminus of the beta chain, while the remainder of the serine residue undergoes an oxidative deamination to produce ammonia and the pyruvoyl prosthetic group on the alpha chain.

The protein resides in the cell membrane. The catalysed reaction is a 1,2-diacyl-sn-glycero-3-phospho-L-serine + H(+) = a 1,2-diacyl-sn-glycero-3-phosphoethanolamine + CO2. Its pathway is phospholipid metabolism; phosphatidylethanolamine biosynthesis; phosphatidylethanolamine from CDP-diacylglycerol: step 2/2. Functionally, catalyzes the formation of phosphatidylethanolamine (PtdEtn) from phosphatidylserine (PtdSer). In Mycobacterium marinum (strain ATCC BAA-535 / M), this protein is Phosphatidylserine decarboxylase proenzyme.